The primary structure comprises 650 residues: Acetyl-coenzyme A synthetase (650 aa).

Residues 191–194 (RGGR), T311, and N335 contribute to the CoA site. Residues 387-389 (GEP), 411-416 (DTWWQT), D500, and R515 each bind ATP. Residue S523 coordinates CoA. R526 serves as a coordination point for ATP. The Mg(2+) site is built by V537, H539, and V542. R584 serves as a coordination point for CoA. Residue K609 is modified to N6-acetyllysine.

This sequence belongs to the ATP-dependent AMP-binding enzyme family. Requires Mg(2+) as cofactor. Acetylated. Deacetylation by the SIR2-homolog deacetylase activates the enzyme.

It catalyses the reaction acetate + ATP + CoA = acetyl-CoA + AMP + diphosphate. Its function is as follows. Catalyzes the conversion of acetate into acetyl-CoA (AcCoA), an essential intermediate at the junction of anabolic and catabolic pathways. AcsA undergoes a two-step reaction. In the first half reaction, AcsA combines acetate with ATP to form acetyl-adenylate (AcAMP) intermediate. In the second half reaction, it can then transfer the acetyl group from AcAMP to the sulfhydryl group of CoA, forming the product AcCoA. This is Acetyl-coenzyme A synthetase from Shewanella putrefaciens (strain CN-32 / ATCC BAA-453).